An 89-amino-acid chain; its full sequence is Small ribosomal subunit protein uS15 (89 aa).

The protein belongs to the universal ribosomal protein uS15 family. Part of the 30S ribosomal subunit. Forms a bridge to the 50S subunit in the 70S ribosome, contacting the 23S rRNA.

Its function is as follows. One of the primary rRNA binding proteins, it binds directly to 16S rRNA where it helps nucleate assembly of the platform of the 30S subunit by binding and bridging several RNA helices of the 16S rRNA. Functionally, forms an intersubunit bridge (bridge B4) with the 23S rRNA of the 50S subunit in the ribosome. This Anaeromyxobacter sp. (strain Fw109-5) protein is Small ribosomal subunit protein uS15.